Consider the following 119-residue polypeptide: Large ribosomal subunit protein uL18 (119 aa).

Belongs to the universal ribosomal protein uL18 family. Part of the 50S ribosomal subunit; part of the 5S rRNA/L5/L18/L25 subcomplex. Contacts the 5S and 23S rRNAs.

This is one of the proteins that bind and probably mediate the attachment of the 5S RNA into the large ribosomal subunit, where it forms part of the central protuberance. The polypeptide is Large ribosomal subunit protein uL18 (Xanthomonas oryzae pv. oryzae (strain MAFF 311018)).